The following is a 522-amino-acid chain: Glycerol kinase (522 aa).

Threonine 15 lines the substrate pocket. Arginine 19 serves as a coordination point for ATP. Substrate-binding positions include 89-90 (RE), tyrosine 143, and 255-256 (DQ). ATP is bound by residues threonine 276, glycine 321, and 430-434 (GATAN).

The protein belongs to the FGGY kinase family. Highly expressed in germinating seeds and senescent leaves, and at lower levels in roots, leaves, flowers and siliques.

It is found in the cytoplasm. Its subcellular location is the cytosol. It carries out the reaction glycerol + ATP = sn-glycerol 3-phosphate + ADP + H(+). Its pathway is polyol metabolism; glycerol degradation via glycerol kinase pathway; sn-glycerol 3-phosphate from glycerol: step 1/1. Functionally, key enzyme in the regulation of glycerol uptake and metabolism. Required for resistance to nonhost Pseudomonas bacteria and to the pathogenic fungus B.cinerea. The polypeptide is Glycerol kinase (GLPK) (Arabidopsis thaliana (Mouse-ear cress)).